Consider the following 114-residue polypeptide: T cell receptor beta variable 6-2 (114 aa).

The N-terminal stretch at 1–21 (MSLGLLCCGAFSLLWAGPVNA) is a signal peptide. In terms of domain architecture, Ig-like spans 22–114 (GVTQTPKFRV…TSVYFCASSY (93 aa)). Residues Cys42 and Cys110 are joined by a disulfide bond. Asn84 carries an N-linked (GlcNAc...) asparagine glycan.

In terms of assembly, alpha-beta TR is a heterodimer composed of an alpha and beta chain; disulfide-linked. The alpha-beta TR is associated with the transmembrane signaling CD3 coreceptor proteins to form the TR-CD3 (TcR or TCR). The assembly of alpha-beta TR heterodimers with CD3 occurs in the endoplasmic reticulum where a single alpha-beta TR heterodimer associates with one CD3D-CD3E heterodimer, one CD3G-CD3E heterodimer and one CD247 homodimer forming a stable octameric structure. CD3D-CD3E and CD3G-CD3E heterodimers preferentially associate with TR alpha and TR beta chains, respectively. The association of the CD247 homodimer is the last step of TcR assembly in the endoplasmic reticulum and is required for transport to the cell surface.

It localises to the cell membrane. V region of the variable domain of T cell receptor (TR) beta chain that participates in the antigen recognition. Alpha-beta T cell receptors are antigen specific receptors which are essential to the immune response and are present on the cell surface of T lymphocytes. Recognize peptide-major histocompatibility (MH) (pMH) complexes that are displayed by antigen presenting cells (APC), a prerequisite for efficient T cell adaptive immunity against pathogens. Binding of alpha-beta TR to pMH complex initiates TR-CD3 clustering on the cell surface and intracellular activation of LCK that phosphorylates the ITAM motifs of CD3G, CD3D, CD3E and CD247 enabling the recruitment of ZAP70. In turn ZAP70 phosphorylates LAT, which recruits numerous signaling molecules to form the LAT signalosome. The LAT signalosome propagates signal branching to three major signaling pathways, the calcium, the mitogen-activated protein kinase (MAPK) kinase and the nuclear factor NF-kappa-B (NF-kB) pathways, leading to the mobilization of transcription factors that are critical for gene expression and essential for T cell growth and differentiation. The T cell repertoire is generated in the thymus, by V-(D)-J rearrangement. This repertoire is then shaped by intrathymic selection events to generate a peripheral T cell pool of self-MH restricted, non-autoaggressive T cells. Post-thymic interaction of alpha-beta TR with the pMH complexes shapes TR structural and functional avidity. This is T cell receptor beta variable 6-2 from Homo sapiens (Human).